Here is a 329-residue protein sequence, read N- to C-terminus: Malate dehydrogenase (329 aa).

NAD(+) is bound at residue G12–G18. 2 residues coordinate substrate: R93 and R99. NAD(+)-binding positions include N106, Q113, and T130 to N132. Substrate-binding residues include N132 and R163. The active-site Proton acceptor is the H188.

The protein belongs to the LDH/MDH superfamily. MDH type 2 family.

It carries out the reaction (S)-malate + NAD(+) = oxaloacetate + NADH + H(+). Its function is as follows. Catalyzes the reversible oxidation of malate to oxaloacetate. This is Malate dehydrogenase from Mycobacterium leprae (strain TN).